The primary structure comprises 61 residues: Potassium channel toxin alpha-KTx 15.6 (61 aa).

The N-terminal stretch at 1-23 (MKAFYGMLVIFILCSTCYISVDS) is a signal peptide. Position 24 is a pyrrolidone carboxylic acid (Gln-24). Disulfide bonds link Cys-31–Cys-52, Cys-37–Cys-57, and Cys-41–Cys-59.

The protein belongs to the short scorpion toxin superfamily. Potassium channel inhibitor family. Alpha-KTx 15 subfamily. Expressed by the venom gland.

Its subcellular location is the secreted. In terms of biological role, irreversibly blocks the A-type voltage-gated potassium channels in rat cerebellum granular cells (190 nM induce 50% inhibitory effect) (IC(50)=190 nM). Also weakly inhibits Kv1.2/KCNA2 and Kv1.3/KCNA3. The chain is Potassium channel toxin alpha-KTx 15.6 from Tityus discrepans (Venezuelan scorpion).